A 77-amino-acid chain; its full sequence is Large ribosomal subunit protein uL24c (77 aa).

Belongs to the universal ribosomal protein uL24 family. As to quaternary structure, part of the 50S ribosomal subunit.

Its subcellular location is the plastid. It is found in the chloroplast. Functionally, one of two assembly initiator proteins, it binds directly to the 5'-end of the 23S rRNA, where it nucleates assembly of the 50S subunit. The protein is Large ribosomal subunit protein uL24c (rpl24) of Trieres chinensis (Marine centric diatom).